The sequence spans 388 residues: Formate-dependent phosphoribosylglycinamide formyltransferase (388 aa).

Residues 20–21 (EL) and glutamate 80 each bind N(1)-(5-phospho-beta-D-ribosyl)glycinamide. Residues arginine 112, lysine 153, 158–163 (SSGKGQ), 193–196 (EEFI), and glutamate 201 each bind ATP. The ATP-grasp domain maps to 117 to 306 (RLAFEKLGLR…EFEIHARAIL (190 aa)). Glutamate 265 and glutamate 277 together coordinate Mg(2+). Residues aspartate 284, lysine 352, and 359-360 (RR) contribute to the N(1)-(5-phospho-beta-D-ribosyl)glycinamide site.

The protein belongs to the PurK/PurT family. As to quaternary structure, homodimer.

The enzyme catalyses N(1)-(5-phospho-beta-D-ribosyl)glycinamide + formate + ATP = N(2)-formyl-N(1)-(5-phospho-beta-D-ribosyl)glycinamide + ADP + phosphate + H(+). The protein operates within purine metabolism; IMP biosynthesis via de novo pathway; N(2)-formyl-N(1)-(5-phospho-D-ribosyl)glycinamide from N(1)-(5-phospho-D-ribosyl)glycinamide (formate route): step 1/1. In terms of biological role, involved in the de novo purine biosynthesis. Catalyzes the transfer of formate to 5-phospho-ribosyl-glycinamide (GAR), producing 5-phospho-ribosyl-N-formylglycinamide (FGAR). Formate is provided by PurU via hydrolysis of 10-formyl-tetrahydrofolate. The chain is Formate-dependent phosphoribosylglycinamide formyltransferase from Methanococcus maripaludis (strain C5 / ATCC BAA-1333).